The primary structure comprises 266 residues: Tryptophan synthase alpha chain (266 aa).

Catalysis depends on proton acceptor residues Glu-49 and Asp-60.

Belongs to the TrpA family. In terms of assembly, tetramer of two alpha and two beta chains.

The enzyme catalyses (1S,2R)-1-C-(indol-3-yl)glycerol 3-phosphate + L-serine = D-glyceraldehyde 3-phosphate + L-tryptophan + H2O. It functions in the pathway amino-acid biosynthesis; L-tryptophan biosynthesis; L-tryptophan from chorismate: step 5/5. The alpha subunit is responsible for the aldol cleavage of indoleglycerol phosphate to indole and glyceraldehyde 3-phosphate. This is Tryptophan synthase alpha chain from Thioalkalivibrio sulfidiphilus (strain HL-EbGR7).